The sequence spans 167 residues: Small ribosomal subunit protein uS5 (167 aa).

The S5 DRBM domain occupies 12 to 75 (LEERVVTINR…EDAKKNMVLV (64 aa)).

This sequence belongs to the universal ribosomal protein uS5 family. As to quaternary structure, part of the 30S ribosomal subunit. Contacts proteins S4 and S8.

With S4 and S12 plays an important role in translational accuracy. In terms of biological role, located at the back of the 30S subunit body where it stabilizes the conformation of the head with respect to the body. This is Small ribosomal subunit protein uS5 from Listeria monocytogenes serotype 4b (strain F2365).